A 188-amino-acid chain; its full sequence is MGIDLIAGGKSKKTKRTEPKSDDVYLKLLVKANRYLVRRTESKFNAVILKRLFMSKVNKAPLSLSRLVRYMDGKDGKIAVIVGTVTDDVRIEDVPALTVTALRFTESARARIHKAGGECLTFDQLALPCPTWSENTVLLRGPKNTREAVKHFGPAPGVPHSHTKPYVRQTGKKIEIARGRRRSRGFKV.

Belongs to the eukaryotic ribosomal protein eL18 family.

The polypeptide is Large ribosomal subunit protein eL18z (RPL18A) (Arabidopsis thaliana (Mouse-ear cress)).